The primary structure comprises 158 residues: Urease accessory protein UreE (158 aa).

The interval 133 to 158 (PEGGAYQAHSHDGHSHHQGHTHDHHD) is disordered. A compositionally biased stretch (basic and acidic residues) spans 141–158 (HSHDGHSHHQGHTHDHHD).

It belongs to the UreE family.

The protein resides in the cytoplasm. Functionally, involved in urease metallocenter assembly. Binds nickel. Probably functions as a nickel donor during metallocenter assembly. This chain is Urease accessory protein UreE, found in Chelativorans sp. (strain BNC1).